Here is a 439-residue protein sequence, read N- to C-terminus: Ornithine aminotransferase, mitochondrial (439 aa).

Residues 1–25 (MFSKLAHLQRFAVLSRGVHSSVASA) constitute a mitochondrion; in hepatic form transit peptide. Residues 1–35 (MFSKLAHLQRFAVLSRGVHSSVASATSVATKKTVQ) constitute a mitochondrion; in renal form transit peptide. 2 positions are modified to N6-acetyllysine: lysine 49 and lysine 66. At lysine 102 the chain carries N6-succinyllysine. Residue lysine 107 is modified to N6-acetyllysine; alternate. N6-succinyllysine; alternate is present on lysine 107. At lysine 292 the chain carries N6-(pyridoxal phosphate)lysine. Residue lysine 362 is modified to N6-acetyllysine; alternate. Lysine 362 bears the N6-succinyllysine; alternate mark. N6-acetyllysine is present on residues lysine 386 and lysine 392. Position 405 is an N6-acetyllysine; alternate (lysine 405). An N6-succinyllysine; alternate modification is found at lysine 405. Lysine 421 is subject to N6-acetyllysine.

Belongs to the class-III pyridoxal-phosphate-dependent aminotransferase family. Homohexamer. Pyridoxal 5'-phosphate serves as cofactor.

The protein localises to the mitochondrion matrix. The catalysed reaction is L-ornithine + 2-oxoglutarate = L-glutamate 5-semialdehyde + L-glutamate. The protein operates within amino-acid biosynthesis; L-proline biosynthesis; L-glutamate 5-semialdehyde from L-ornithine: step 1/1. Catalyzes the reversible interconversion of L-ornithine and 2-oxoglutarate to L-glutamate semialdehyde and L-glutamate. This chain is Ornithine aminotransferase, mitochondrial (OAT), found in Homo sapiens (Human).